Here is a 104-residue protein sequence, read N- to C-terminus: Acetylcholine receptor subunit alpha (104 aa).

Residues 1-104 (NPPAIFKSYC…YFIVNVIIPC (104 aa)) are Extracellular-facing. 2 disulfide bridges follow: Cys10–Cys24 and Cys74–Cys75. Residue Asn23 is glycosylated (N-linked (GlcNAc...) asparagine).

Belongs to the ligand-gated ion channel (TC 1.A.9) family. Acetylcholine receptor (TC 1.A.9.1) subfamily. Alpha-1/CHRNA1 sub-subfamily. As to quaternary structure, one of the alpha chains that assemble within the acetylcholine receptor, a pentamer of two alpha chains, a beta, a delta, and a gamma or epsilon chains.

It is found in the postsynaptic cell membrane. It localises to the cell membrane. The enzyme catalyses K(+)(in) = K(+)(out). It catalyses the reaction Na(+)(in) = Na(+)(out). Its function is as follows. Upon acetylcholine binding, the AChR responds by an extensive change in conformation that affects all subunits and leads to opening of an ion-conducting channel across the plasma membrane. This chain is Acetylcholine receptor subunit alpha (CHRNA1), found in Naja naja (Indian cobra).